The chain runs to 247 residues: Small ribosomal subunit protein uS2 (247 aa).

Belongs to the universal ribosomal protein uS2 family.

The protein is Small ribosomal subunit protein uS2 of Halorhodospira halophila (strain DSM 244 / SL1) (Ectothiorhodospira halophila (strain DSM 244 / SL1)).